The sequence spans 417 residues: Glutamyl-tRNA reductase (417 aa).

Substrate is bound by residues 49–52, Ser105, 110–112, and Gln116; these read TCNR and ETQ. Cys50 (nucleophile) is an active-site residue. Position 185 to 190 (185 to 190) interacts with NADP(+); sequence GAGEMI.

The protein belongs to the glutamyl-tRNA reductase family. Homodimer.

The catalysed reaction is (S)-4-amino-5-oxopentanoate + tRNA(Glu) + NADP(+) = L-glutamyl-tRNA(Glu) + NADPH + H(+). The protein operates within porphyrin-containing compound metabolism; protoporphyrin-IX biosynthesis; 5-aminolevulinate from L-glutamyl-tRNA(Glu): step 1/2. Functionally, catalyzes the NADPH-dependent reduction of glutamyl-tRNA(Glu) to glutamate 1-semialdehyde (GSA). The chain is Glutamyl-tRNA reductase from Chromobacterium violaceum (strain ATCC 12472 / DSM 30191 / JCM 1249 / CCUG 213 / NBRC 12614 / NCIMB 9131 / NCTC 9757 / MK).